Reading from the N-terminus, the 159-residue chain is NADH-quinone oxidoreductase subunit I (159 aa).

2 4Fe-4S ferredoxin-type domains span residues 50-80 and 90-119; these read QRRY…IESE and KRYD…ETHI. C60, C63, C66, C70, C99, C102, C105, and C109 together coordinate [4Fe-4S] cluster.

Belongs to the complex I 23 kDa subunit family. As to quaternary structure, NDH-1 is composed of 14 different subunits. Subunits NuoA, H, J, K, L, M, N constitute the membrane sector of the complex. [4Fe-4S] cluster serves as cofactor.

Its subcellular location is the cell inner membrane. The catalysed reaction is a quinone + NADH + 5 H(+)(in) = a quinol + NAD(+) + 4 H(+)(out). Its function is as follows. NDH-1 shuttles electrons from NADH, via FMN and iron-sulfur (Fe-S) centers, to quinones in the respiratory chain. The immediate electron acceptor for the enzyme in this species is believed to be ubiquinone. Couples the redox reaction to proton translocation (for every two electrons transferred, four hydrogen ions are translocated across the cytoplasmic membrane), and thus conserves the redox energy in a proton gradient. This Neisseria meningitidis serogroup A / serotype 4A (strain DSM 15465 / Z2491) protein is NADH-quinone oxidoreductase subunit I.